The primary structure comprises 125 residues: Plastocyanin (125 aa).

The first 34 residues, 1–34, serve as a signal peptide directing secretion; that stretch reads MKVLASFARRLSLFAVAAVLCVGSFFLSAAPASA. The 91-residue stretch at 35 to 125 folds into the Plastocyanin-like domain; sequence QTVAIKMGAD…AGMVGKIVVQ (91 aa). Cu cation is bound by residues histidine 73, cysteine 110, histidine 113, and methionine 118.

The protein belongs to the plastocyanin family. Cu(2+) is required as a cofactor.

It is found in the cellular thylakoid membrane. Participates in electron transfer between P700 and the cytochrome b6-f complex in photosystem I. The protein is Plastocyanin (petE) of Synechococcus elongatus (strain ATCC 33912 / PCC 7942 / FACHB-805) (Anacystis nidulans R2).